An 859-amino-acid polypeptide reads, in one-letter code: Leucine--tRNA ligase (859 aa).

The 'HIGH' region signature appears at Pro-42–His-52. A 'KMSKS' region motif is present at residues Lys-618–Ser-622. ATP is bound at residue Lys-621.

The protein belongs to the class-I aminoacyl-tRNA synthetase family.

Its subcellular location is the cytoplasm. The enzyme catalyses tRNA(Leu) + L-leucine + ATP = L-leucyl-tRNA(Leu) + AMP + diphosphate. The polypeptide is Leucine--tRNA ligase (Shewanella sp. (strain MR-4)).